Reading from the N-terminus, the 74-residue chain is MKNQKSNTLWPFDLPLAPQPEGYQQQTIDRLAGLELRMKQLIRAIEVNNELLRTMQEQQNRVCTNGSGSVIVRM.

A coiled-coil region spans residues 25 to 62 (QQTIDRLAGLELRMKQLIRAIEVNNELLRTMQEQQNRV).

This is an uncharacterized protein from Bacillus subtilis (strain 168).